A 296-amino-acid polypeptide reads, in one-letter code: MESAKRVLVYLTKENSLLQCAKFAQGITGHYSANNGDKAFIHCGLEKNQFVISDCQFLGSARVQLQRPSFCPIKNLSPRQSASLPQEIQGRGVDVGVAVLVQSINKKVLLTRRSKSLNIFPNVWVPPGGHVELGEQLLEAGLRELQEETGLRLQEVSWSMLGLWESAFPPLLSRGLPSRHHIVTYLLVQTNETHQQMQERLCPDEREVSACVWLDTEIAKHIVAAEDSGSPCGPLPASISVLELIHGSLSQSDRSMATFLNSAPKEGEDIERISTGTKYALSLWLDGMPTNSSPCA.

The Nudix hydrolase domain maps to 90 to 236 (GRGVDVGVAV…DSGSPCGPLP (147 aa)). The Nudix box motif lies at 129–150 (GHVELGEQLLEAGLRELQEETG). Mg(2+) is bound by residues glutamate 144 and glutamate 148.

This sequence belongs to the Nudix hydrolase family. The cofactor is Mg(2+). Requires Mn(2+) as cofactor.

It carries out the reaction a 5'-end (N(7)-methyl 5'-triphosphoguanosine)-ribonucleoside in mRNA + H2O = N(7)-methyl-GDP + a 5'-end phospho-ribonucleoside in mRNA + 2 H(+). In terms of biological role, acts as a decapping enzyme capable of hydrolyzing monomethylated capped RNAs (in vitro). Hydrolyzes monomethylated capped RNA after alpha and beta phosphates to form N(7)-methyl-GDP. Shows low activity towards unmethylated capped RNA. The polypeptide is m7GpppN-mRNA hydrolase NUDT17 (nudt17) (Xenopus laevis (African clawed frog)).